The primary structure comprises 200 residues: NAD(P)H dehydrogenase (quinone) (200 aa).

Residues 4–191 (VLVLYYSSYG…DIARYQGKHV (188 aa)) enclose the Flavodoxin-like domain. Residues 10-15 (SSYGHV) and 79-81 (TRF) contribute to the FMN site. Y12 provides a ligand contact to NAD(+). W99 is a substrate binding site. FMN contacts are provided by residues 114–120 (STGTQHG) and H135.

This sequence belongs to the WrbA family. It depends on FMN as a cofactor.

The enzyme catalyses a quinone + NADH + H(+) = a quinol + NAD(+). The catalysed reaction is a quinone + NADPH + H(+) = a quinol + NADP(+). The sequence is that of NAD(P)H dehydrogenase (quinone) from Burkholderia cenocepacia (strain ATCC BAA-245 / DSM 16553 / LMG 16656 / NCTC 13227 / J2315 / CF5610) (Burkholderia cepacia (strain J2315)).